A 694-amino-acid polypeptide reads, in one-letter code: Polynucleotide 3'-phosphatase ZDP (694 aa).

PARP-type zinc fingers lie at residues 50-132 (VVAE…EQCG) and 165-247 (VIAD…EVNK). Zn(2+)-binding residues include Cys62, Cys65, His93, Cys96, Cys177, Cys180, His208, and Cys211. The interval 266–331 (AIADNELTEE…SPDSSKVISE (66 aa)) is disordered. Over residues 302–321 (ESKKPASDEISEQKTKDVKN) the composition is skewed to basic and acidic residues. The segment covering 322-331 (SPDSSKVISE) has biased composition (polar residues). The PARP-type 3 zinc finger occupies 328 to 410 (VISEYAKSSR…ALKELVQQCG (83 aa)). Cys340, Cys343, His371, and Cys374 together coordinate Zn(2+).

In the C-terminal section; belongs to the DNA 3' phosphatase family. In terms of assembly, interacts with ROS1 (via the central region). Binds to XRCC1.

The protein resides in the nucleus. Its subcellular location is the nucleoplasm. The enzyme catalyses a 3'end (2'-deoxyribonucleotide 3'-phosphate)-DNA + H2O = a 3'-end 2'-deoxyribonucleotide-DNA + phosphate. Activated by the presence of DNA. Stimulated by XRCC1. Its function is as follows. Nick-sensing 3'-phosphoesterase involved in a base excision repair pathway required for active DNA demethylation. The N-terminal DNA-binding domain binds specifically to gap sites and sharply bends the target DNA. Lacks 5'-kinase activity but is capable of 3'-phosphoglycolate end processing. Inactive on 3'-alpha,beta-unsaturated aldehyde (3'-dRP). Protects partially genes from transcriptional silencing by preventing promoter DNA hypermethylation. This is Polynucleotide 3'-phosphatase ZDP (ZDP) from Arabidopsis thaliana (Mouse-ear cress).